The sequence spans 32 residues: MSDIN-like toxin proprotein 11 (32 aa).

Positions 1-10 (MSDINATRLP) are excised as a propeptide. The disordered stretch occupies residues 1–32 (MSDINATRLPGMEPPSPMPCVGDADNFTLTRG). Positions 11–19 (GMEPPSPMP) form a cross-link, cyclopeptide (Gly-Pro). The propeptide occupies 20 to 32 (CVGDADNFTLTRG).

It belongs to the MSDIN fungal toxin family. Post-translationally, processed by the macrocyclase-peptidase enzyme POPB to yield a toxic cyclic nonapeptide. POPB first removes 10 residues from the N-terminus. Conformational trapping of the remaining peptide forces the enzyme to release this intermediate rather than proceed to macrocyclization. The enzyme rebinds the remaining peptide in a different conformation and catalyzes macrocyclization of the N-terminal 9 residues.

Functionally, probable toxin that belongs to the MSDIN-like toxin family responsible for a large number of food poisoning cases and deaths. This Amanita bisporigera (Destroying angel) protein is MSDIN-like toxin proprotein 11.